Here is a 932-residue protein sequence, read N- to C-terminus: Protocadherin gamma-A9 (932 aa).

Residues 1-28 form the signal peptide; the sequence is MAAPTKCQLRGRLVLLCSLLGMLWEARA. 6 Cadherin domains span residues 29–133, 134–242, 243–347, 348–452, 453–562, and 570–683; these read SQIR…APKF, QAES…APVF, AQRI…RPEV, TITS…PPAF, SQAS…APEI, and DGST…IPAD. Residues 29–692 lie on the Extracellular side of the membrane; sequence SQIRYSVPEE…DLEASDLTLY (664 aa). 2 N-linked (GlcNAc...) asparagine glycosylation sites follow: Asn-47 and Asn-127. 3 N-linked (GlcNAc...) asparagine glycosylation sites follow: Asn-389, Asn-419, and Asn-545. Residues 693 to 713 traverse the membrane as a helical segment; sequence LVVAVAVVSCVFLTFVITLLA. The Cytoplasmic portion of the chain corresponds to 714–932; that stretch reads LRLRHWHSSH…KKKSGKKEKK (219 aa). Disordered regions lie at residues 803–841 and 902–932; these read DTPL…WPNN and ATLT…KEKK. A compositionally biased stretch (polar residues) spans 816–841; that stretch reads WRFSQAQRPGTSGSQNGDDTGTWPNN. Residues 922 to 932 are compositionally biased toward basic residues; it reads NKKKSGKKEKK.

It is found in the cell membrane. Functionally, potential calcium-dependent cell-adhesion protein. May be involved in the establishment and maintenance of specific neuronal connections in the brain. This is Protocadherin gamma-A9 (PCDHGA9) from Homo sapiens (Human).